We begin with the raw amino-acid sequence, 620 residues long: PAN2-PAN3 deadenylation complex subunit PAN3 (620 aa).

The C3H1-type zinc finger occupies 7–36; the sequence is SAKGTLCKNILIYGYCKYENKGCAFSHRRN. Disordered stretches follow at residues 39 to 73 and 95 to 168; these read ANSG…QPST and VFVP…QPGP. Polar residues-rich tracts occupy residues 63-73 and 101-126; these read NVNTPSFQPST and TPAS…TVSN. The interval 226–482 is pseudokinase domain; sequence QSYPGGPEIV…LESYIRKHLA (257 aa). ATP contacts are provided by residues R274, 323-330, and 380-381; these read DYYPNAST and SK. Residues 483 to 521 are a coiled coil; sequence IRLLDVVDMLEDSNDYLESQLSTELENARLVRLMTKINF. Positions 522–620 are knob domain; it reads IVDRPEWDNE…SVFRTITRGK (99 aa).

It belongs to the protein kinase superfamily. PAN3 family. Homodimer. Forms a heterotrimer with a catalytic subunit PAN2 to form the poly(A)-nuclease (PAN) deadenylation complex. Interacts (via PAM-2 motif) with poly(A)-binding protein PAB1 (via PABC domain), conferring substrate specificity of the enzyme complex.

The protein resides in the cytoplasm. Its function is as follows. Regulatory subunit of the poly(A)-nuclease (PAN) deadenylation complex, one of two cytoplasmic mRNA deadenylases involved in mRNA turnover. PAN specifically shortens poly(A) tails of RNA and the activity is stimulated by poly(A)-binding protein PAB1. PAN deadenylation is followed by rapid degradation of the shortened mRNA tails by the CCR4-NOT complex. Deadenylated mRNAs are then degraded by two alternative mechanisms, namely exosome-mediated 3'-5' exonucleolytic degradation, or deadenylation-dependent mRNA decaping and subsequent 5'-3' exonucleolytic degradation by XRN1. May also be involved in post-transcriptional maturation of mRNA poly(A) tails. PAN3 acts as a positive regulator for PAN activity, recruiting the catalytic subunit PAN2 to mRNA via its interaction with RNA and with PAB1. The chain is PAN2-PAN3 deadenylation complex subunit PAN3 from Meyerozyma guilliermondii (strain ATCC 6260 / CBS 566 / DSM 6381 / JCM 1539 / NBRC 10279 / NRRL Y-324) (Yeast).